The following is a 286-amino-acid chain: Ribosomal RNA small subunit methyltransferase H (286 aa).

S-adenosyl-L-methionine-binding positions include 17 to 19 (AGH), Asp-36, Phe-63, Asp-84, and Gln-91.

It belongs to the methyltransferase superfamily. RsmH family.

The protein resides in the cytoplasm. The catalysed reaction is cytidine(1402) in 16S rRNA + S-adenosyl-L-methionine = N(4)-methylcytidine(1402) in 16S rRNA + S-adenosyl-L-homocysteine + H(+). In terms of biological role, specifically methylates the N4 position of cytidine in position 1402 (C1402) of 16S rRNA. The chain is Ribosomal RNA small subunit methyltransferase H from Metamycoplasma arthritidis (strain 158L3-1) (Mycoplasma arthritidis).